Consider the following 737-residue polypeptide: MAESELEKLRQDIAILTEKYEQAKEDIHKAANAGLELLRQKEDLEKRLAEMQAELDLARTEIDKTNQTLAEYRSQHQRSTRSELENEESLLEESSAKEEEYLQRIAKLEADLKKKEQELAEKKEELESIEKKHSKEIDSGAALEDERRKLRAELKETKEREQRLISEYSELEEENIGLQKTVANLRGSQVEYESLRIDNNRLEETIEIMKMAAEEDEILRVIADKQLEEALLTAQQERDQRLAMKRELEQTRNAEHISSLNDMLFGLERLGEDGELPPPQPGASDLFSELQGSSDVKVRELEAAKEGLQEELKSREKIFIEFVTGLADTLNIHRPTNELDYMHARQQKDVVLEKIQNIARDTDRHDKEGEEKRSGILKADLRTLVLVAGEKSAQLAAAQDAMIQVSDQLYQFYHQMTQNQGVQTEKSVQEIVKKLRLLARANAEDVPRVSLADEGVESGTETDVNASRSIPLNSDRLVIAPSFAKEIEKKLASVKIGDVLSETDLRQRILTEGNAISETTESLKKMIQVVKRTSEQAFNQAVMASGAENEIEMQNMKLRSLLSTKRDQISTLRTVLKSNKLTAESALTSMREKYESEKKMMMEINDKMRRELKQLKEDAATFASHRAMFTARGEELKSKVEELSNELRANEEEKKTLNQLLRLAIQQKLTLTQRLEEVEVDRDRQVFKRSSTRAPTRETYQPPRAVRYPGSTTTAQQPAPSSSGGSRGGPRRGDNQQ.

Coiled coils occupy residues 1-255 (MAES…RNAE), 292-319 (GSSD…EKIF), and 547-684 (AENE…DRDR). A disordered region spans residues 72–97 (YRSQHQRSTRSELENEESLLEESSAK). Residues 686–737 (VFKRSSTRAPTRETYQPPRAVRYPGSTTTAQQPAPSSSGGSRGGPRRGDNQQ) are disordered. Polar residues predominate over residues 710-719 (GSTTTAQQPA).

The protein belongs to the BicD family. Component of a dynein-regulating complex composed of at least bicd-1, dlc-1 and egal-1. Interacts with egal-1 and unc-83. Expressed in the excretory cell, body wall muscles, vulval muscle cells, PVD and FLP sensory neurons and AVF interneurons.

The protein resides in the nucleus envelope. It is found in the perikaryon. The protein localises to the cell projection. Its subcellular location is the dendrite. Part of a complex with dlc-1 and egal-1, which is recruited to the nuclear envelope by unc-83, where in turn, it recruits dynein to the nuclear surface and regulates nuclear migration in hypodermal precursor cells. Required for the formation of dendritic branches of PVD sensory neurons. This Caenorhabditis elegans protein is Protein bicaudal D homolog.